A 124-amino-acid polypeptide reads, in one-letter code: uncharacterized protein (124 aa).

The protein localises to the cytoplasm. The protein resides in the nucleus. This is an uncharacterized protein from Schizosaccharomyces pombe (strain 972 / ATCC 24843) (Fission yeast).